The primary structure comprises 530 residues: Lysine--tRNA ligase (530 aa).

Residues 28 to 36 (PSGHIHVGN) carry the 'HIGH' region motif. The short motif at 278–282 (PMSSS) is the 'KMSKS' region element.

This sequence belongs to the class-I aminoacyl-tRNA synthetase family.

Its subcellular location is the cytoplasm. It catalyses the reaction tRNA(Lys) + L-lysine + ATP = L-lysyl-tRNA(Lys) + AMP + diphosphate. This Methanocaldococcus jannaschii (strain ATCC 43067 / DSM 2661 / JAL-1 / JCM 10045 / NBRC 100440) (Methanococcus jannaschii) protein is Lysine--tRNA ligase (lysS).